Here is a 338-residue protein sequence, read N- to C-terminus: Pyridoxal 5'-phosphate synthase subunit PdxS (338 aa).

Asp-66 is a D-ribose 5-phosphate binding site. The active-site Schiff-base intermediate with D-ribose 5-phosphate is the Lys-123. Gly-195 is a binding site for D-ribose 5-phosphate. Lys-207 provides a ligand contact to D-glyceraldehyde 3-phosphate. D-ribose 5-phosphate contacts are provided by residues Gly-256 and 277 to 278 (GS).

The protein belongs to the PdxS/SNZ family. In the presence of PdxT, forms a dodecamer of heterodimers.

The enzyme catalyses aldehydo-D-ribose 5-phosphate + D-glyceraldehyde 3-phosphate + L-glutamine = pyridoxal 5'-phosphate + L-glutamate + phosphate + 3 H2O + H(+). The protein operates within cofactor biosynthesis; pyridoxal 5'-phosphate biosynthesis. In terms of biological role, catalyzes the formation of pyridoxal 5'-phosphate from ribose 5-phosphate (RBP), glyceraldehyde 3-phosphate (G3P) and ammonia. The ammonia is provided by the PdxT subunit. Can also use ribulose 5-phosphate and dihydroxyacetone phosphate as substrates, resulting from enzyme-catalyzed isomerization of RBP and G3P, respectively. The polypeptide is Pyridoxal 5'-phosphate synthase subunit PdxS (Saccharolobus islandicus (strain L.S.2.15 / Lassen #1) (Sulfolobus islandicus)).